A 142-amino-acid chain; its full sequence is Putative pre-16S rRNA nuclease (142 aa).

Belongs to the YqgF nuclease family.

It localises to the cytoplasm. Its function is as follows. Could be a nuclease involved in processing of the 5'-end of pre-16S rRNA. The protein is Putative pre-16S rRNA nuclease of Staphylococcus carnosus (strain TM300).